The sequence spans 336 residues: Pentalenene synthase (336 aa).

D80, D84, N219, S223, and E227 together coordinate Mg(2+). Positions 80-84 (DDLFD) match the DDXXD motif motif.

This sequence belongs to the terpene synthase family. As to quaternary structure, monomer. It depends on Mg(2+) as a cofactor.

It carries out the reaction (2E,6E)-farnesyl diphosphate = pentalenene + diphosphate. Its pathway is antibiotic biosynthesis; neopentalenolactone biosynthesis. In terms of biological role, catalyzes the cyclization of farnesyl diphosphate (FPP) to the tricyclic sesquiterpene pentalenene in the biosynthesis of neopentalenolactone antibiotic. The polypeptide is Pentalenene synthase (ptlA) (Streptomyces avermitilis (strain ATCC 31267 / DSM 46492 / JCM 5070 / NBRC 14893 / NCIMB 12804 / NRRL 8165 / MA-4680)).